Here is a 111-residue protein sequence, read N- to C-terminus: Nucleoid-associated protein Fphi_0115 (111 aa).

Residues 1 to 27 (MNFDMSKLMQQAQKMQEQMKKAQQERE) form a disordered region. The segment covering 17–27 (EQMKKAQQERE) has biased composition (basic and acidic residues).

Belongs to the YbaB/EbfC family. In terms of assembly, homodimer.

The protein localises to the cytoplasm. It localises to the nucleoid. Binds to DNA and alters its conformation. May be involved in regulation of gene expression, nucleoid organization and DNA protection. The sequence is that of Nucleoid-associated protein Fphi_0115 from Francisella philomiragia subsp. philomiragia (strain ATCC 25017 / CCUG 19701 / FSC 153 / O#319-036).